The following is a 657-amino-acid chain: Translation factor GUF1, mitochondrial (657 aa).

Residues 1 to 39 constitute a mitochondrion transit peptide; it reads MRGCLQSVKWLTSAVRQSQSLTSSTRFPRRLFNTSTLHY. One can recognise a tr-type G domain in the interval 59 to 239; the sequence is ERFRNFCIVA…TVIEQVPAPV (181 aa). GTP contacts are provided by residues 68-75, 132-136, and 186-189; these read AHVDHGKS, DTPGH, and NKVD.

It belongs to the TRAFAC class translation factor GTPase superfamily. Classic translation factor GTPase family. LepA subfamily.

Its subcellular location is the mitochondrion inner membrane. The enzyme catalyses GTP + H2O = GDP + phosphate + H(+). In terms of biological role, promotes mitochondrial protein synthesis. May act as a fidelity factor of the translation reaction, by catalyzing a one-codon backward translocation of tRNAs on improperly translocated ribosomes. Binds to mitochondrial ribosomes in a GTP-dependent manner. In Blastomyces gilchristii (strain SLH14081) (Blastomyces dermatitidis), this protein is Translation factor GUF1, mitochondrial.